Reading from the N-terminus, the 331-residue chain is Phosphate acyltransferase (331 aa).

This sequence belongs to the PlsX family. As to quaternary structure, homodimer. Probably interacts with PlsY.

The protein resides in the cytoplasm. It catalyses the reaction a fatty acyl-[ACP] + phosphate = an acyl phosphate + holo-[ACP]. It functions in the pathway lipid metabolism; phospholipid metabolism. In terms of biological role, catalyzes the reversible formation of acyl-phosphate (acyl-PO(4)) from acyl-[acyl-carrier-protein] (acyl-ACP). This enzyme utilizes acyl-ACP as fatty acyl donor, but not acyl-CoA. This is Phosphate acyltransferase from Clostridium acetobutylicum (strain ATCC 824 / DSM 792 / JCM 1419 / IAM 19013 / LMG 5710 / NBRC 13948 / NRRL B-527 / VKM B-1787 / 2291 / W).